We begin with the raw amino-acid sequence, 144 residues long: Gastric inhibitory polypeptide (144 aa).

The first 21 residues, 1-21 (MVALKTCSLLLVLLFLAVGLG), serve as a signal peptide directing secretion. 2 consecutive propeptides follow at residues 22 to 42 (EKEE…PRGP) and 87 to 144 (EARA…LRSQ). Positions 94–113 (AGQSQGKEDKEAQESSLPKS) are disordered.

It belongs to the glucagon family.

The protein localises to the secreted. Functionally, potent stimulator of insulin secretion and relatively poor inhibitor of gastric acid secretion. The protein is Gastric inhibitory polypeptide (Gip) of Mus musculus (Mouse).